A 594-amino-acid polypeptide reads, in one-letter code: Protein REBELOTE (594 aa).

Residues 1 to 13 (MGKLGKKARKFAK) are compositionally biased toward basic residues. Disordered regions lie at residues 1–21 (MGKL…SVEK) and 35–58 (AKRN…PKKR). 3 short sequence motifs (nuclear localization signal) span residues 8-15 (ARKFAKKN), 35-42 (AKRNERHQ), and 512-519 (LKKFHERS). Residues 36 to 58 (KRNERHQAGDKQEKKVEQQPKKR) are compositionally biased toward basic and acidic residues.

It belongs to the NOC2 family. In terms of assembly, interacts with SWA2, NOC2 and NOC3 in both the nucleolus and nucleoplasm. Binds to ENAP1 and OBE1. As to expression, expressed at low levels in roots, shoots, leaves, stems, inflorescences, flowers and siliques, with highest levels dividing tissues.

It is found in the nucleus. The protein resides in the nucleolus. Its subcellular location is the nucleoplasm. Collaboratively with CYP40/SQN and ULT1, influences floral meristem (FM) determinacy in an AGAMOUS and SUPERMAN-dependent manner, thus contributing to the floral developmental homeostasis. This chain is Protein REBELOTE, found in Arabidopsis thaliana (Mouse-ear cress).